A 276-amino-acid chain; its full sequence is Large ribosomal subunit protein uL2 (276 aa).

The tract at residues 223–276 (VVMNPVDHPHGGGEGKSSGGRHPVSPWGKKTRGPKTRNNKVTDRLIIRRRNAKR) is disordered. The segment covering 251–260 (KKTRGPKTRN) has biased composition (basic residues).

Belongs to the universal ribosomal protein uL2 family. Part of the 50S ribosomal subunit. Forms a bridge to the 30S subunit in the 70S ribosome.

Its function is as follows. One of the primary rRNA binding proteins. Required for association of the 30S and 50S subunits to form the 70S ribosome, for tRNA binding and peptide bond formation. It has been suggested to have peptidyltransferase activity; this is somewhat controversial. Makes several contacts with the 16S rRNA in the 70S ribosome. This chain is Large ribosomal subunit protein uL2, found in Hyphomonas neptunium (strain ATCC 15444).